The following is a 275-amino-acid chain: Ribosomal RNA small subunit methyltransferase A (275 aa).

N28, L30, G55, E77, D103, and N123 together coordinate S-adenosyl-L-methionine.

The protein belongs to the class I-like SAM-binding methyltransferase superfamily. rRNA adenine N(6)-methyltransferase family. RsmA subfamily.

It localises to the cytoplasm. The enzyme catalyses adenosine(1518)/adenosine(1519) in 16S rRNA + 4 S-adenosyl-L-methionine = N(6)-dimethyladenosine(1518)/N(6)-dimethyladenosine(1519) in 16S rRNA + 4 S-adenosyl-L-homocysteine + 4 H(+). Its function is as follows. Specifically dimethylates two adjacent adenosines (A1518 and A1519) in the loop of a conserved hairpin near the 3'-end of 16S rRNA in the 30S particle. May play a critical role in biogenesis of 30S subunits. The chain is Ribosomal RNA small subunit methyltransferase A from Rhizobium etli (strain ATCC 51251 / DSM 11541 / JCM 21823 / NBRC 15573 / CFN 42).